The chain runs to 214 residues: Octanoyltransferase (214 aa).

The region spanning 35-211 is the BPL/LPL catalytic domain; sequence KSNMNFIWLG…IIHEEFNFNF (177 aa). Substrate is bound by residues 75–82, 142–144, and 155–157; these read RGGEVTCH, SIG, and GFS. Cysteine 173 serves as the catalytic Acyl-thioester intermediate.

It belongs to the LipB family.

Its subcellular location is the cytoplasm. The enzyme catalyses octanoyl-[ACP] + L-lysyl-[protein] = N(6)-octanoyl-L-lysyl-[protein] + holo-[ACP] + H(+). Its pathway is protein modification; protein lipoylation via endogenous pathway; protein N(6)-(lipoyl)lysine from octanoyl-[acyl-carrier-protein]: step 1/2. In terms of biological role, catalyzes the transfer of endogenously produced octanoic acid from octanoyl-acyl-carrier-protein onto the lipoyl domains of lipoate-dependent enzymes. Lipoyl-ACP can also act as a substrate although octanoyl-ACP is likely to be the physiological substrate. The polypeptide is Octanoyltransferase (Prochlorococcus marinus subsp. pastoris (strain CCMP1986 / NIES-2087 / MED4)).